A 171-amino-acid polypeptide reads, in one-letter code: Alpha-amylase/trypsin inhibitor CMd (171 aa).

The N-terminal stretch at 1–24 (MACKSSRSLLLLATVMVSVFAAAA) is a signal peptide.

Belongs to the protease inhibitor I6 (cereal trypsin/alpha-amylase inhibitor) family. In terms of assembly, heterotetramer of one CMa, one CMb and two CMd chains. Five disulfide bonds, which are essential for the inhibitor activity, are probably present. As to expression, endosperm.

The protein localises to the secreted. Its function is as follows. Part of a complex with inhibitory activity, but CMd is inactive as a separate subunit. The protein is Alpha-amylase/trypsin inhibitor CMd (IAT3) of Hordeum vulgare (Barley).